Reading from the N-terminus, the 253-residue chain is 3-deoxy-manno-octulosonate cytidylyltransferase (253 aa).

This sequence belongs to the KdsB family.

The protein localises to the cytoplasm. The enzyme catalyses 3-deoxy-alpha-D-manno-oct-2-ulosonate + CTP = CMP-3-deoxy-beta-D-manno-octulosonate + diphosphate. It functions in the pathway nucleotide-sugar biosynthesis; CMP-3-deoxy-D-manno-octulosonate biosynthesis; CMP-3-deoxy-D-manno-octulosonate from 3-deoxy-D-manno-octulosonate and CTP: step 1/1. Its pathway is bacterial outer membrane biogenesis; lipopolysaccharide biosynthesis. Activates KDO (a required 8-carbon sugar) for incorporation into bacterial lipopolysaccharide in Gram-negative bacteria. The protein is 3-deoxy-manno-octulosonate cytidylyltransferase of Neisseria meningitidis serogroup C (strain 053442).